Here is a 493-residue protein sequence, read N- to C-terminus: Lysine--tRNA ligase (493 aa).

Residues glutamate 406 and glutamate 413 each coordinate Mg(2+).

This sequence belongs to the class-II aminoacyl-tRNA synthetase family. As to quaternary structure, homodimer. Mg(2+) is required as a cofactor.

It is found in the cytoplasm. The enzyme catalyses tRNA(Lys) + L-lysine + ATP = L-lysyl-tRNA(Lys) + AMP + diphosphate. In Leuconostoc citreum (strain KM20), this protein is Lysine--tRNA ligase.